Consider the following 105-residue polypeptide: Small ribosomal subunit protein uS10 (105 aa).

It belongs to the universal ribosomal protein uS10 family. Part of the 30S ribosomal subunit.

In terms of biological role, involved in the binding of tRNA to the ribosomes. This is Small ribosomal subunit protein uS10 from Anaplasma marginale (strain Florida).